We begin with the raw amino-acid sequence, 541 residues long: 2-succinyl-5-enolpyruvyl-6-hydroxy-3-cyclohexene-1-carboxylate synthase (541 aa).

This sequence belongs to the TPP enzyme family. MenD subfamily. In terms of assembly, homodimer. The cofactor is Mg(2+). Mn(2+) is required as a cofactor. It depends on thiamine diphosphate as a cofactor.

It carries out the reaction isochorismate + 2-oxoglutarate + H(+) = 5-enolpyruvoyl-6-hydroxy-2-succinyl-cyclohex-3-ene-1-carboxylate + CO2. Its pathway is quinol/quinone metabolism; 1,4-dihydroxy-2-naphthoate biosynthesis; 1,4-dihydroxy-2-naphthoate from chorismate: step 2/7. It participates in quinol/quinone metabolism; menaquinone biosynthesis. In terms of biological role, catalyzes the thiamine diphosphate-dependent decarboxylation of 2-oxoglutarate and the subsequent addition of the resulting succinic semialdehyde-thiamine pyrophosphate anion to isochorismate to yield 2-succinyl-5-enolpyruvyl-6-hydroxy-3-cyclohexene-1-carboxylate (SEPHCHC). The protein is 2-succinyl-5-enolpyruvyl-6-hydroxy-3-cyclohexene-1-carboxylate synthase of Leuconostoc mesenteroides subsp. mesenteroides (strain ATCC 8293 / DSM 20343 / BCRC 11652 / CCM 1803 / JCM 6124 / NCDO 523 / NBRC 100496 / NCIMB 8023 / NCTC 12954 / NRRL B-1118 / 37Y).